We begin with the raw amino-acid sequence, 503 residues long: AMP phosphorylase (503 aa).

Residues glycine 168, 194 to 199 (SRAITS), and threonine 203 each bind AMP. Residue aspartate 256 is the Proton donor of the active site. The AMP site is built by serine 264 and lysine 288.

This sequence belongs to the thymidine/pyrimidine-nucleoside phosphorylase family. Type 2 subfamily.

It catalyses the reaction AMP + phosphate = alpha-D-ribose 1,5-bisphosphate + adenine. The catalysed reaction is CMP + phosphate = cytosine + alpha-D-ribose 1,5-bisphosphate. It carries out the reaction UMP + phosphate = alpha-D-ribose 1,5-bisphosphate + uracil. Functionally, catalyzes the conversion of AMP and phosphate to adenine and ribose 1,5-bisphosphate (R15P). Exhibits phosphorylase activity toward CMP and UMP in addition to AMP. Functions in an archaeal AMP degradation pathway, together with R15P isomerase and RubisCO. The chain is AMP phosphorylase (deoA) from Pyrococcus abyssi (strain GE5 / Orsay).